The primary structure comprises 108 residues: UPF0060 membrane protein Mflv_3127 (108 aa).

The next 4 membrane-spanning stretches (helical) occupy residues 7–27 (LLFV…WQGF), 32–52 (GWLW…VAAF), 61–81 (VLAA…MVAD), and 87–107 (RWDI…MYAP).

The protein belongs to the UPF0060 family.

The protein localises to the cell membrane. In Mycolicibacterium gilvum (strain PYR-GCK) (Mycobacterium gilvum (strain PYR-GCK)), this protein is UPF0060 membrane protein Mflv_3127.